The chain runs to 146 residues: Protein SprT-like (146 aa).

The SprT-like domain maps to 6–141 (YVKTVSIEDF…GCGLCQGKLI (136 aa)). Zn(2+) is bound at residue His64. Glu65 is an active-site residue. Residue His68 participates in Zn(2+) binding.

Belongs to the SprT family. Requires Zn(2+) as cofactor.

Its subcellular location is the cytoplasm. This is Protein SprT-like from Streptococcus thermophilus (strain CNRZ 1066).